The chain runs to 232 residues: Small ribosomal subunit protein uS3 (232 aa).

In terms of domain architecture, KH type-2 spans 39–107; the sequence is VRQYLTKELK…PAQINIAEVR (69 aa).

This sequence belongs to the universal ribosomal protein uS3 family. In terms of assembly, part of the 30S ribosomal subunit. Forms a tight complex with proteins S10 and S14.

Its function is as follows. Binds the lower part of the 30S subunit head. Binds mRNA in the 70S ribosome, positioning it for translation. The chain is Small ribosomal subunit protein uS3 from Aliivibrio salmonicida (strain LFI1238) (Vibrio salmonicida (strain LFI1238)).